The chain runs to 332 residues: Probable sugar phosphate/phosphate translocator At1g53660 (332 aa).

10 helical membrane passes run 19–39, 46–66, 82–102, 120–140, 143–163, 165–185, 199–219, 233–253, 259–281, and 285–304; these read ASIL…KWVL, FPYP…LCFL, LEIY…TLWL, AIMP…IMSC, LLIM…ELNI, WVGV…LILM, LSLM…PWIF, LVLS…FLVI, LTIR…LLFA, and LTII…ATYN. Over residues 312 to 322 the composition is skewed to polar residues; it reads ESITLVSQSPK. The tract at residues 312–332 is disordered; it reads ESITLVSQSPKNSDKKPDGPL. Basic and acidic residues predominate over residues 323-332; the sequence is NSDKKPDGPL.

It belongs to the TPT transporter family. TPT (TC 2.A.7.9) subfamily.

The protein resides in the membrane. In Arabidopsis thaliana (Mouse-ear cress), this protein is Probable sugar phosphate/phosphate translocator At1g53660.